The primary structure comprises 568 residues: Protein OCTOPUS-like (568 aa).

Disordered regions lie at residues 1 to 27, 78 to 99, 168 to 203, 242 to 276, 360 to 428, 446 to 512, and 526 to 558; these read MNLS…RLST, LFKP…RPGF, EEAE…ELKP, QKQK…PRFS, PGGS…DKKS, DDEE…SKDG, and RSWK…SHGH. Residues 82–93 are compositionally biased toward low complexity; it reads SSSGTNNSNGNG. Residues 168 to 179 are compositionally biased toward acidic residues; it reads EEAEIEEDEENG. The span at 180–193 shows a compositional bias: basic and acidic residues; it reads EKDPGEIVEEKSSE. S260 is subject to Phosphoserine. Positions 400–423 are enriched in polar residues; that stretch reads SVSNSTTTIDSNSMETAENKGNQN. The segment covering 532–546 has biased composition (gly residues); it reads GGSGGGGGGGGGGGW.

It belongs to the OCTOPUS family. Post-translationally, phosphorylation at Ser-260 amplifies the promotion of protophloem differentiation.

It is found in the cell membrane. The protein localises to the cytoplasm. In terms of biological role, potentiates primary root protophloem differentiation. Regulates roots architecture. The sequence is that of Protein OCTOPUS-like from Arabidopsis thaliana (Mouse-ear cress).